The following is a 440-amino-acid chain: Xylose isomerase (440 aa).

Active-site residues include histidine 101 and aspartate 104. Positions 232, 268, 271, 296, 307, 309, and 339 each coordinate Mg(2+).

The protein belongs to the xylose isomerase family. Homotetramer. The cofactor is Mg(2+).

It is found in the cytoplasm. It catalyses the reaction alpha-D-xylose = alpha-D-xylulofuranose. This Escherichia coli (strain SE11) protein is Xylose isomerase.